The primary structure comprises 429 residues: MALVTLGINHRTAPVEIRERVAFTPERMAEAFSELRAASGASEAAILSTCNRTELYLAGDDDCAPSVLRWLAGFHELDVADLENVLYVHRDSDAVRHMMRVAAGLDSMVLGEPQILGQLKDAYALAREHSATGSFLSRLFEQTFSVAKRVRTQTAIGENPVSVAYASVSMAHHIFADMSRNKALLIGAGKTIELVARHLAEAGVRSFLVANRTLEKAQALAEAHGGKGILLSEIPDHLSDVDIVISSTASPLPILGKGAVERALKKRKHRPYFMVDIAVPRDIEPEVASLADVYLYTVDDLRQVIEENIRSREGAAREAENLISSGVQDFLDQLRALDAVSTLKVFRQRAELLRDVETEKALRALRNGTDPETALRSLARGLTNKLLHQPSVQVRKAMAEGRTEVTECLRELYQLDALEADEPTTTEKL.

Substrate contacts are provided by residues 49–52 (TCNR), Ser107, 112–114 (EPQ), and Gln118. The Nucleophile role is filled by Cys50. NADP(+) is bound at residue 187–192 (GAGKTI).

This sequence belongs to the glutamyl-tRNA reductase family. Homodimer.

The catalysed reaction is (S)-4-amino-5-oxopentanoate + tRNA(Glu) + NADP(+) = L-glutamyl-tRNA(Glu) + NADPH + H(+). Its pathway is porphyrin-containing compound metabolism; protoporphyrin-IX biosynthesis; 5-aminolevulinate from L-glutamyl-tRNA(Glu): step 1/2. In terms of biological role, catalyzes the NADPH-dependent reduction of glutamyl-tRNA(Glu) to glutamate 1-semialdehyde (GSA). This chain is Glutamyl-tRNA reductase, found in Marinobacter nauticus (strain ATCC 700491 / DSM 11845 / VT8) (Marinobacter aquaeolei).